Reading from the N-terminus, the 603-residue chain is Probable methyltransferase-like protein 25 (603 aa).

Residues 326-352 (TSSQQIPNRETSEANKERRKMTSKSSE) are disordered.

Functionally, probable methyltransferase. This is Probable methyltransferase-like protein 25 (METTL25) from Homo sapiens (Human).